A 182-amino-acid polypeptide reads, in one-letter code: Large ribosomal subunit protein uL6 (182 aa).

Belongs to the universal ribosomal protein uL6 family. As to quaternary structure, part of the 50S ribosomal subunit.

Its function is as follows. This protein binds to the 23S rRNA, and is important in its secondary structure. It is located near the subunit interface in the base of the L7/L12 stalk, and near the tRNA binding site of the peptidyltransferase center. In Methanococcus maripaludis (strain C5 / ATCC BAA-1333), this protein is Large ribosomal subunit protein uL6.